The chain runs to 1299 residues: DNA-directed RNA polymerase subunit beta' (1299 aa).

Zn(2+) is bound by residues Cys60, Cys62, Cys75, and Cys78. A disordered region spans residues 385–405; the sequence is GRRGRPVTGPGNRPLKSLSDM. Asp535, Asp537, and Asp539 together coordinate Mg(2+). Zn(2+)-binding residues include Cys886, Cys962, Cys969, and Cys972.

The protein belongs to the RNA polymerase beta' chain family. The RNAP catalytic core consists of 2 alpha, 1 beta, 1 beta' and 1 omega subunit. When a sigma factor is associated with the core the holoenzyme is formed, which can initiate transcription. Mg(2+) serves as cofactor. The cofactor is Zn(2+).

The catalysed reaction is RNA(n) + a ribonucleoside 5'-triphosphate = RNA(n+1) + diphosphate. DNA-dependent RNA polymerase catalyzes the transcription of DNA into RNA using the four ribonucleoside triphosphates as substrates. The polypeptide is DNA-directed RNA polymerase subunit beta' (Streptomyces coelicolor (strain ATCC BAA-471 / A3(2) / M145)).